The chain runs to 345 residues: S-adenosylmethionine:tRNA ribosyltransferase-isomerase (345 aa).

It belongs to the QueA family. Monomer.

The protein localises to the cytoplasm. It catalyses the reaction 7-aminomethyl-7-carbaguanosine(34) in tRNA + S-adenosyl-L-methionine = epoxyqueuosine(34) in tRNA + adenine + L-methionine + 2 H(+). Its pathway is tRNA modification; tRNA-queuosine biosynthesis. In terms of biological role, transfers and isomerizes the ribose moiety from AdoMet to the 7-aminomethyl group of 7-deazaguanine (preQ1-tRNA) to give epoxyqueuosine (oQ-tRNA). In Finegoldia magna (strain ATCC 29328 / DSM 20472 / WAL 2508) (Peptostreptococcus magnus), this protein is S-adenosylmethionine:tRNA ribosyltransferase-isomerase.